The following is a 369-amino-acid chain: DNA replication and repair protein RecF (369 aa).

Position 30-37 (30-37 (GENAQGKT)) interacts with ATP.

This sequence belongs to the RecF family.

Its subcellular location is the cytoplasm. The RecF protein is involved in DNA metabolism; it is required for DNA replication and normal SOS inducibility. RecF binds preferentially to single-stranded, linear DNA. It also seems to bind ATP. This chain is DNA replication and repair protein RecF, found in Oceanobacillus iheyensis (strain DSM 14371 / CIP 107618 / JCM 11309 / KCTC 3954 / HTE831).